The following is a 172-amino-acid chain: Zinc finger protein 580 (172 aa).

The disordered stretch occupies residues 1–92 (MLLLPPRPPH…PGEPGPRKGY (92 aa)). Residues 19–30 (MDPPPPKTPPFP) are compositionally biased toward pro residues. K31 is covalently cross-linked (Glycyl lysine isopeptide (Lys-Gly) (interchain with G-Cter in SUMO2)). The C2H2-type 1 zinc finger occupies 92–114 (YSCPECARVFASPLRLQSHRVSH). K118 participates in a covalent cross-link: Glycyl lysine isopeptide (Lys-Gly) (interchain with G-Cter in SUMO2). 2 C2H2-type zinc fingers span residues 120 to 142 (FTCGACGKAFKRSSHLSRHRATH) and 150 to 172 (HTCPLCPRRFQDAAELAQHVRLH).

Interacts with SMAD2.

The protein localises to the nucleus. In terms of biological role, involved in the regulation of endothelial cell proliferation and migration. Mediates H(2)O(2)-induced leukocyte chemotaxis by elevating interleukin-8 production and may play a role in inflammation. May be involved in transcriptional regulation. The protein is Zinc finger protein 580 (Znf580) of Mus musculus (Mouse).